A 436-amino-acid chain; its full sequence is Xylose isomerase (436 aa).

2 residues coordinate Mg(2+): Asp-306 and Asp-308.

The protein belongs to the xylose isomerase family. As to quaternary structure, homotetramer. It depends on Mg(2+) as a cofactor.

It is found in the cytoplasm. The catalysed reaction is alpha-D-xylose = alpha-D-xylulofuranose. This is Xylose isomerase from Rhizobium rhizogenes (strain K84 / ATCC BAA-868) (Agrobacterium radiobacter).